The chain runs to 471 residues: 6-phosphofructo-2-kinase/fructose-2,6-bisphosphatase 1 (471 aa).

Ser-2 bears the N-acetylserine mark. A 6-phosphofructo-2-kinase region spans residues 2–250 (SREMGELTQT…AYYLMNIHVT (249 aa)). Ser-33 carries the phosphoserine; by PKA modification. 49-57 (GLPARGKTY) provides a ligand contact to ATP. The beta-D-fructose 6-phosphate site is built by Arg-82 and Arg-105. The active site involves Asp-131. Residues Thr-133 and Arg-139 each coordinate beta-D-fructose 6-phosphate. Ser-141 carries the post-translational modification Phosphoserine. The active site involves Cys-161. Residue 170-175 (NIKQVK) participates in ATP binding. Residues Lys-175, Arg-196, and Tyr-200 each contribute to the beta-D-fructose 6-phosphate site. The fructose-2,6-bisphosphatase stretch occupies residues 251 to 471 (PRSIYLCRHG…EALDTVPAHY (221 aa)). Arg-258 contributes to the beta-D-fructose 2,6-bisphosphate binding site. The active-site Tele-phosphohistidine intermediate is His-259. Residues Asn-265, Gly-271, and Arg-308 each contribute to the beta-D-fructose 2,6-bisphosphate site. Glu-328 (proton donor/acceptor) is an active-site residue. Residues Tyr-339, Arg-353, Lys-357, Tyr-368, Gln-394, and Arg-398 each coordinate beta-D-fructose 2,6-bisphosphate. 350–353 (FALR) is an ATP binding site. ATP contacts are provided by residues 394–398 (QAVMR) and Tyr-430.

The protein in the C-terminal section; belongs to the phosphoglycerate mutase family. Homodimer. As to expression, liver.

The enzyme catalyses beta-D-fructose 2,6-bisphosphate + H2O = beta-D-fructose 6-phosphate + phosphate. It carries out the reaction beta-D-fructose 6-phosphate + ATP = beta-D-fructose 2,6-bisphosphate + ADP + H(+). Its activity is regulated as follows. Phosphorylation at Ser-33 inhibits the kinase and activates the bisphosphatase. Its function is as follows. Synthesis and degradation of fructose 2,6-bisphosphate. This Mus musculus (Mouse) protein is 6-phosphofructo-2-kinase/fructose-2,6-bisphosphatase 1.